Reading from the N-terminus, the 128-residue chain is Probable 4-amino-4-deoxy-L-arabinose-phosphoundecaprenol flippase subunit ArnF (128 aa).

At 1–2 (MG) the chain is on the cytoplasmic side. The chain crosses the membrane as a helical span at residues 3 to 23 (LMWGLFSVIIASVAQLSLGFA). Residues 24 to 35 (ASHLPPMTHLWD) are Periplasmic-facing. The chain crosses the membrane as a helical span at residues 36-56 (FIAALLAFGLDARILLLGLLG). The Cytoplasmic portion of the chain corresponds to 57 to 76 (YLLSVFCWYKTLHKLALSKA). A helical membrane pass occupies residues 77-97 (YALLSMSYVLVWIASMVLPGW). Residues 98–100 (EGT) are Periplasmic-facing. A helical transmembrane segment spans residues 101–121 (FSLKALLGVACIMSGLMLIFL). Residues 122-128 (PTTKQRY) are Cytoplasmic-facing.

The protein belongs to the ArnF family. Heterodimer of ArnE and ArnF.

The protein localises to the cell inner membrane. It functions in the pathway bacterial outer membrane biogenesis; lipopolysaccharide biosynthesis. Functionally, translocates 4-amino-4-deoxy-L-arabinose-phosphoundecaprenol (alpha-L-Ara4N-phosphoundecaprenol) from the cytoplasmic to the periplasmic side of the inner membrane. The polypeptide is Probable 4-amino-4-deoxy-L-arabinose-phosphoundecaprenol flippase subunit ArnF (Shigella sonnei (strain Ss046)).